Reading from the N-terminus, the 100-residue chain is Large ribosomal subunit protein uL23 (100 aa).

This sequence belongs to the universal ribosomal protein uL23 family. Part of the 50S ribosomal subunit. Contacts protein L29, and trigger factor when it is bound to the ribosome.

Its function is as follows. One of the early assembly proteins it binds 23S rRNA. One of the proteins that surrounds the polypeptide exit tunnel on the outside of the ribosome. Forms the main docking site for trigger factor binding to the ribosome. This Mycolicibacterium paratuberculosis (strain ATCC BAA-968 / K-10) (Mycobacterium paratuberculosis) protein is Large ribosomal subunit protein uL23.